A 152-amino-acid polypeptide reads, in one-letter code: Small ribosomal subunit protein uS13 (152 aa).

It belongs to the universal ribosomal protein uS13 family. As to quaternary structure, part of the 30S ribosomal subunit. Forms a loose heterodimer with protein S19. Forms two bridges to the 50S subunit in the 70S ribosome.

Located at the top of the head of the 30S subunit, it contacts several helices of the 16S rRNA. In the 70S ribosome it contacts the 23S rRNA (bridge B1a) and protein L5 of the 50S subunit (bridge B1b), connecting the 2 subunits; these bridges are implicated in subunit movement. This is Small ribosomal subunit protein uS13 from Pyrobaculum arsenaticum (strain DSM 13514 / JCM 11321 / PZ6).